The primary structure comprises 434 residues: Transcription initiation factor IIE subunit alpha (434 aa).

Positions 8–99 (VQRLIKMIMR…DFCSTIDSIK (92 aa)) constitute an HTH TFE/IIEalpha-type domain. A C4-type zinc finger spans residues 124-151 (CPFCNKKFSSLDVLSLVTNEGTFACNVC). Disordered stretches follow at residues 217–251 (QQNLSKSNSDVRLSTSSPSITVDFSADKETDEKRE), 357–408 (STDY…EMQE), and 415–434 (INGFNEDDEDDEDEADFEDV). Over residues 226-238 (DVRLSTSSPSITV) the composition is skewed to polar residues. 2 stretches are compositionally biased toward basic and acidic residues: residues 241–251 (SADKETDEKRE) and 376–385 (IQNKRTKSIE). The span at 386–399 (ENNSLPPIVSTNGI) shows a compositional bias: polar residues. Over residues 419–434 (NEDDEDDEDEADFEDV) the composition is skewed to acidic residues.

The protein belongs to the TFIIE alpha subunit family. As to quaternary structure, TFIIE is a tetramer of two alpha (tfa1) and two beta (tfa2) subunits.

The protein resides in the nucleus. In terms of biological role, recruits TFIIH to the initiation complex and stimulates the RNA polymerase II C-terminal domain kinase and DNA-dependent ATPase activities of TFIIH. Both TFIIH and TFIIE are required for promoter clearance by RNA polymerase. This is Transcription initiation factor IIE subunit alpha (tfa1) from Schizosaccharomyces pombe (strain 972 / ATCC 24843) (Fission yeast).